The chain runs to 203 residues: Proteasome subunit beta 1 (203 aa).

The propeptide at 1–7 (MTEKLKG) is removed in mature form; by autocatalysis. Catalysis depends on T8, which acts as the Nucleophile.

This sequence belongs to the peptidase T1B family. In terms of assembly, the 20S proteasome core is composed of 14 alpha and 14 beta subunits that assemble into four stacked heptameric rings, resulting in a barrel-shaped structure. The two inner rings, each composed of seven catalytic beta subunits, are sandwiched by two outer rings, each composed of seven alpha subunits. The catalytic chamber with the active sites is on the inside of the barrel. Has a gated structure, the ends of the cylinder being occluded by the N-termini of the alpha-subunits. Is capped at one or both ends by the proteasome regulatory ATPase, PAN.

The protein resides in the cytoplasm. The catalysed reaction is Cleavage of peptide bonds with very broad specificity.. Its activity is regulated as follows. The formation of the proteasomal ATPase PAN-20S proteasome complex, via the docking of the C-termini of PAN into the intersubunit pockets in the alpha-rings, triggers opening of the gate for substrate entry. Interconversion between the open-gate and close-gate conformations leads to a dynamic regulation of the 20S proteasome proteolysis activity. Its function is as follows. Component of the proteasome core, a large protease complex with broad specificity involved in protein degradation. The protein is Proteasome subunit beta 1 of Thermococcus kodakarensis (strain ATCC BAA-918 / JCM 12380 / KOD1) (Pyrococcus kodakaraensis (strain KOD1)).